The chain runs to 64 residues: Cytochrome c oxidase subunit 5C-2 (64 aa).

Residues 15–34 (SVVKELVIGTVLGLAAGGLW) form a helical membrane-spanning segment.

The protein belongs to the cytochrome c oxidase subunit 5C family.

Its subcellular location is the mitochondrion inner membrane. Functionally, this protein is one of the nuclear-coded polypeptide chains of cytochrome c oxidase, the terminal oxidase in mitochondrial electron transport. The polypeptide is Cytochrome c oxidase subunit 5C-2 (COX5C2) (Helianthus annuus (Common sunflower)).